The sequence spans 429 residues: N5-carboxyaminoimidazole ribonucleotide synthase (429 aa).

Residues lysine 117, lysine 157, 194-197 (EERV), glutamate 202, and 280-281 (NE) each bind ATP. The region spanning 121-310 (RQRLAAAGVA…QFEQHLRAVL (190 aa)) is the ATP-grasp domain. The segment at 406–429 (RASDDAVGVPPACGGRSDEEERRL) is disordered.

This sequence belongs to the PurK/PurT family. As to quaternary structure, homodimer.

The catalysed reaction is 5-amino-1-(5-phospho-beta-D-ribosyl)imidazole + hydrogencarbonate + ATP = 5-carboxyamino-1-(5-phospho-D-ribosyl)imidazole + ADP + phosphate + 2 H(+). Its pathway is purine metabolism; IMP biosynthesis via de novo pathway; 5-amino-1-(5-phospho-D-ribosyl)imidazole-4-carboxylate from 5-amino-1-(5-phospho-D-ribosyl)imidazole (N5-CAIR route): step 1/2. Catalyzes the ATP-dependent conversion of 5-aminoimidazole ribonucleotide (AIR) and HCO(3)(-) to N5-carboxyaminoimidazole ribonucleotide (N5-CAIR). This chain is N5-carboxyaminoimidazole ribonucleotide synthase, found in Mycobacterium bovis (strain ATCC BAA-935 / AF2122/97).